The sequence spans 402 residues: APO protein 3, mitochondrial (402 aa).

Residues 1-13 (MQRRKLVEISIFV) constitute a mitochondrion transit peptide. Residues 37–59 (NDEDPLYADVPKPPKDKSERKPY) are disordered. A compositionally biased stretch (basic and acidic residues) spans 48–58 (KPPKDKSERKP). 2 consecutive APO domains span residues 127 to 213 (RCRL…DLEK) and 294 to 380 (TCGY…PVPD).

It belongs to the APO family.

Its subcellular location is the mitochondrion. Its function is as follows. May be involved in the stable assembly of several 4Fe-4S cluster-containing complexes of mitochondria. The sequence is that of APO protein 3, mitochondrial (APO3) from Arabidopsis thaliana (Mouse-ear cress).